The following is a 564-amino-acid chain: Cell division cycle 7-related protein kinase (564 aa).

Ser-21 is subject to Phosphoserine. A Protein kinase domain is found at 52 to 564; the sequence is FKIKDKIGEG…LHAFFKDMCS (513 aa). ATP contacts are provided by residues 58–66 and Lys-84; that span reads IGEGTFSSV. Asp-171 acts as the Proton acceptor in catalysis. A Glycyl lysine isopeptide (Lys-Gly) (interchain with G-Cter in SUMO2) cross-link involves residue Lys-260. Residues 460 to 506 are disordered; it reads DSTTPRSASGPPGNASYDPAASKNTDHKASRVQAAQAQHSEDSLYKR.

This sequence belongs to the protein kinase superfamily. Ser/Thr protein kinase family. CDC7 subfamily. Forms a complex with either DBF4/DBF4A or DBF4B, leading to the activation of the kinase activity. Interacts with CLASPIN (via the acidic patch); the interaction is required for phosphorylation of MCM proteins and CLASPIN. Requires Mg(2+) as cofactor.

The protein resides in the nucleus. The enzyme catalyses L-seryl-[protein] + ATP = O-phospho-L-seryl-[protein] + ADP + H(+). It catalyses the reaction L-threonyl-[protein] + ATP = O-phospho-L-threonyl-[protein] + ADP + H(+). Functionally, kinase involved in initiation of DNA replication. Phosphorylates critical substrates that regulate the G1/S phase transition and initiation of DNA replication, such as MCM proteins and CLASPIN. The protein is Cell division cycle 7-related protein kinase (Cdc7) of Mus musculus (Mouse).